A 144-amino-acid polypeptide reads, in one-letter code: MNRTILVPIDISDSELTQRVISHVEAEAKIDDAKVHFLTVIPSLPYYASLGLAYSAELPAMDDLKAEAKSQLEAIIKKFNLPADRVQAHVAEGSPKDKILEMAKKLPADMVIIASHRPDITTYLLGSNAAAVVRHAECSVLVVR.

The protein belongs to the universal stress protein A family. In terms of assembly, homodimer.

The chain is Universal stress protein F (uspF) from Salmonella typhi.